The chain runs to 297 residues: Mitochondrial nicotinamide adenine dinucleotide transporter SLC25A51 (297 aa).

The segment covering methionine 1–proline 11 has biased composition (basic and acidic residues). A disordered region spans residues methionine 1–aspartate 20. Solcar repeat units lie at residues valine 28 to leucine 108, proline 116 to histidine 200, and asparagine 213 to valine 296. 6 helical membrane passes run cysteine 36 to phenylalanine 56, leucine 85 to leucine 105, proline 116 to phenylalanine 135, isoleucine 179 to glutamate 199, phenylalanine 215 to valine 235, and leucine 268 to threonine 289.

This sequence belongs to the mitochondrial carrier (TC 2.A.29) family.

Its subcellular location is the mitochondrion inner membrane. The catalysed reaction is NAD(+)(in) = NAD(+)(out). Mitochondrial membrane carrier protein that mediates the import of NAD(+) into mitochondria. Mitochondrial NAD(+) is required for glycolysis and mitochondrial respiration. Compared to SLC25A52, SLC25A51-mediated transport is essential for the import of NAD(+) in mitochondria. The transport mechanism, uniport or antiport, its electrogenicity and substrate selectivity, remain to be elucidated. This Homo sapiens (Human) protein is Mitochondrial nicotinamide adenine dinucleotide transporter SLC25A51.